The primary structure comprises 307 residues: Lipid droplet-associated hydrolase (307 aa).

The Nucleophile role is filled by Ser-119. The segment at 157-200 (GWVFTKVAMPLYSVFGYIFFSFFNFLPVWLRLMLIQIYFLIFSI) is potential amphipathic helix required for binding to lipid droplets. Helical transmembrane passes span 166–186 (PLYS…PVWL) and 188–208 (LMLI…LGTA). Catalysis depends on charge relay system residues Asp-254 and His-283.

The protein belongs to the AB hydrolase superfamily. LDAH family. In terms of assembly, interacts with the juvenile hormone hydrolase enzymes Jheh1 and Jheh2. Also interacts with Hmu, Cpr, Gp93 and Pvr. Expressed in accessory glands.

The protein resides in the lipid droplet. It is found in the endoplasmic reticulum membrane. The enzyme catalyses a cholesterol ester + H2O = cholesterol + a fatty acid + H(+). Functionally, probable serine lipid hydrolase associated with lipid droplets. Appears to lack or have very low cholesterol esterase activity. Appears to lack triglyceride lipase activity. Involved in cholesterol and triglyceride homeostasis; stimulates cellular triglyceride accumulation and cellular cholesterol release. Involved in negatively regulating juvenile hormone (JH) and possibly, insulin signaling activities such as triacylglycerols (TAG) storage, and thereby plays a role in the endocrine regulation of organismal growth and survival. Likely functions by enhancing the activity of the JH hydrolase enzymes Jheh1 and Jheh2. Required for lipid droplet positioning and fat storage. The sequence is that of Lipid droplet-associated hydrolase from Drosophila melanogaster (Fruit fly).